The sequence spans 604 residues: Cytosolic Fe-S cluster assembly factor nar1 (604 aa).

The [4Fe-4S] cluster site is built by Cys-20, Cys-62, Cys-65, Cys-68, Cys-215, and Cys-270. The tract at residues 434-461 (LPGAKPAVRPAAGRRQPMSRNAVSTGSS) is disordered. The segment covering 451-461 (MSRNAVSTGSS) has biased composition (polar residues). Residues Cys-473 and Cys-477 each coordinate [4Fe-4S] cluster.

Belongs to the NARF family.

Functionally, component of the cytosolic Fe/S protein assembly machinery. Required for maturation of extramitochondrial Fe/S proteins. May play a role in the transfer of pre-assembled Fe/S clusters to target apoproteins. This Penicillium rubens (strain ATCC 28089 / DSM 1075 / NRRL 1951 / Wisconsin 54-1255) (Penicillium chrysogenum) protein is Cytosolic Fe-S cluster assembly factor nar1 (nar1).